Reading from the N-terminus, the 168-residue chain is MFWLLIAILIVQRAAEMAVARQNEQKVKKQGAIEFGESHYPYIITMHILFFLSLIAEVLLMNKQPSSWWLGIAAVILSVQIVRYWALCSLGAYWNTKILVVPGVELVKKGPYKWMKHPNYAVVILEILLIPLLYQAYVTMCLFSIFNAVLLSVRIRAEDKALQEYSVK.

4 helical membrane passes run 1–21, 41–61, 68–88, and 123–143; these read MFWLLIAILIVQRAAEMAVAR, PYIITMHILFFLSLIAEVLLM, WWLGIAAVILSVQIVRYWALC, and VILEILLIPLLYQAYVTMCLF.

The protein resides in the cell membrane. This is an uncharacterized protein from Bacillus subtilis (strain 168).